We begin with the raw amino-acid sequence, 276 residues long: Mitochondrial outer membrane protein porin 2 (276 aa).

Residue S76 is modified to Phosphoserine. At T236 the chain carries Phosphothreonine.

The protein belongs to the eukaryotic mitochondrial porin (TC 1.B.8.1) family. In terms of tissue distribution, expressed in root tips, steles, leaves, sepals, petals, stamen and pistils.

The protein resides in the mitochondrion outer membrane. Forms a channel through the mitochondrial outer membrane that allows diffusion of small hydrophilic molecules. The channel adopts an open conformation at low or zero membrane potential and a closed conformation at potentials above 30-40 mV. The open state has a weak anion selectivity whereas the closed state is cation-selective. Involved in plant growth and development at the vegetative and reproductive stages. Is important for leaf and pollen development and mitochondrial membrane potential steady state. May be involved in ABA-mediated early seedling development and disease resistance. This is Mitochondrial outer membrane protein porin 2 (VDAC2) from Arabidopsis thaliana (Mouse-ear cress).